The following is a 336-amino-acid chain: Protein SGT1 homolog (336 aa).

Alanine 2 carries the post-translational modification N-acetylalanine. 3 TPR repeats span residues 11-44 (SQRL…NPDD), 45-78 (AQYY…NPNN), and 79-112 (CTAL…DSTD). The CS domain maps to 140–229 (QSKIKYDWYQ…PEAVRWEKLE (90 aa)). At threonine 236 the chain carries Phosphothreonine. The SGS domain occupies 247 to 336 (MYPSSSHYTR…PPDDMEWKQY (90 aa)). The residue at position 252 (serine 252) is a Phosphoserine. Threonine 255 is modified (phosphothreonine). Lysine 266 is covalently cross-linked (Glycyl lysine isopeptide (Lys-Gly) (interchain with G-Cter in SUMO1); alternate). Lysine 266 participates in a covalent cross-link: Glycyl lysine isopeptide (Lys-Gly) (interchain with G-Cter in SUMO2); alternate. Serine 302 carries the phosphoserine modification.

It belongs to the SGT1 family. In terms of assembly, probably associates with SCF (SKP1-CUL1-F-box protein) complex through interaction with SKP1. Interacts with S100A6. Interacts with HSP90. In terms of processing, phosphorylated at Ser-252 and Ser-302, dephosphorylation promotes nuclear translocation, most likely due to disruption of the SUGT1-HSP90 complex.

It is found in the cytoplasm. The protein localises to the nucleus. May play a role in ubiquitination and subsequent proteasomal degradation of target proteins. The polypeptide is Protein SGT1 homolog (Mus musculus (Mouse)).